The sequence spans 631 residues: Replication protein E1 (631 aa).

The interval 28 to 48 is disordered; the sequence is TGDIISEDETEEDEGTASDLD. The segment covering 32–43 has biased composition (acidic residues); the sequence is ISEDETEEDEGT. The Nuclear localization signal motif lies at 86–88; that stretch reads KRK. Position 92 is a phosphoserine; by host (Ser-92). Residues 168–334 are DNA-binding region; the sequence is IGATPPQQIQ…QTQIQHSFQD (167 aa). Positions 433 to 583 constitute an SF3 helicase domain; it reads VDFISFLSYF…FPIDTNGNPV (151 aa). 459 to 466 is an ATP binding site; sequence GPPNTGKS. Lys-540 participates in a covalent cross-link: Glycyl lysine isopeptide (Lys-Gly) (interchain with G-Cter in SUMO).

It belongs to the papillomaviridae E1 protein family. In terms of assembly, can form hexamers. Interacts with E2 protein; this interaction increases E1 DNA binding specificity. Interacts with host DNA polymerase subunit POLA2. Interacts with host single stranded DNA-binding protein RPA1. Interacts with host TOP1; this interaction stimulates the enzymatic activity of TOP1. Post-translationally, phosphorylated. Sumoylated.

The protein localises to the host nucleus. The enzyme catalyses Couples ATP hydrolysis with the unwinding of duplex DNA by translocating in the 3'-5' direction.. It catalyses the reaction ATP + H2O = ADP + phosphate + H(+). Its function is as follows. ATP-dependent DNA 3'-5' helicase required for initiation of viral DNA replication. It forms a complex with the viral E2 protein. The E1-E2 complex binds to the replication origin which contains binding sites for both proteins. During the initial step, a dimer of E1 interacts with a dimer of protein E2 leading to a complex that binds the viral origin of replication with high specificity. Then, a second dimer of E1 displaces the E2 dimer in an ATP-dependent manner to form the E1 tetramer. Following this, two E1 monomers are added to each half of the site, which results in the formation of two E1 trimers on the viral ori. Subsequently, two hexamers will be created. The double hexamer acts as a bi-directional helicase machinery and unwinds the viral DNA and then recruits the host DNA polymerase to start replication. The chain is Replication protein E1 from Homo sapiens (Human).